A 291-amino-acid polypeptide reads, in one-letter code: Elongation factor Ts (291 aa).

The interval 78 to 81 is involved in Mg(2+) ion dislocation from EF-Tu; the sequence is TDFV.

It belongs to the EF-Ts family.

Its subcellular location is the cytoplasm. Associates with the EF-Tu.GDP complex and induces the exchange of GDP to GTP. It remains bound to the aminoacyl-tRNA.EF-Tu.GTP complex up to the GTP hydrolysis stage on the ribosome. The polypeptide is Elongation factor Ts (Ureaplasma urealyticum serovar 10 (strain ATCC 33699 / Western)).